A 556-amino-acid chain; its full sequence is CDP-diacylglycerol--glycerol-3-phosphate 3-phosphatidyltransferase, mitochondrial (556 aa).

The transit peptide at 1-28 (MAVAAAAAAGPVFWRRLLGLLPGRPGLA) directs the protein to the mitochondrion. Ser49 carries the phosphoserine modification. Residue 124–131 (ASLYLGTG) coordinates ATP. PLD phosphodiesterase domains lie at 215–241 (TIGLQHIKVYLFDNSVILSGANLSDSY) and 460–493 (RGWTFHAKGLWLYLAGSSLPCLTLIGSPNFGYRS). Active-site residues include His220, Lys222, and Asp227.

This sequence belongs to the CDP-alcohol phosphatidyltransferase class-II family.

The protein localises to the mitochondrion. The enzyme catalyses a CDP-1,2-diacyl-sn-glycerol + sn-glycerol 3-phosphate = a 1,2-diacyl-sn-glycero-3-phospho-(1'-sn-glycero-3'-phosphate) + CMP + H(+). The protein operates within phospholipid metabolism; phosphatidylglycerol biosynthesis; phosphatidylglycerol from CDP-diacylglycerol: step 1/2. Its activity is regulated as follows. Activated by calcium and magnesium and inhibited by other bivalent cations. Functions in the biosynthesis of the anionic phospholipids phosphatidylglycerol and cardiolipin. The protein is CDP-diacylglycerol--glycerol-3-phosphate 3-phosphatidyltransferase, mitochondrial (PGS1) of Homo sapiens (Human).